Here is a 129-residue protein sequence, read N- to C-terminus: uncharacterized protein (129 aa).

Helical transmembrane passes span 15 to 35 (IFIIIVDNEAFLHFSCLIFVF), 48 to 68 (IFSFFFLTRRFSFIVVIYYFF), and 107 to 127 (INIFLPPFALTVVQFLVNLVC).

It is found in the membrane. This is an uncharacterized protein from Saccharomyces cerevisiae (strain ATCC 204508 / S288c) (Baker's yeast).